We begin with the raw amino-acid sequence, 1363 residues long: MFLILLISLPMALAVIGDLKCTTVSINDVDTGVPSISTDTVDVTNGLGTYYVLDRVYLNTTLLLNGYYPTSGSTYRNMALKGTLLLSTLWFKPPFLSDFINGIFAKVKNTKVIKHGVMYSEFPAITIGSTFVNTSYSVVVQPHTTNLDNKLQGLLEISVCQYTMCEYPNTICHPNLGNRRVELWHWDTGVVSCLYKRNFTYDVNADYLYFHFYQEGGTFYAYFTDTGVVTKFLFNVYLGTVLSHYYVMPLTCNSAMTLEYWVTPLTSKQYLLAFNQDGVIFNAVDCKSDFMSEIKCKTLSIAPSTGVYELNGYTVQPIADVYRRIPNLPDCNIEAWLNDKSVPSPLNWERKTFSNCNFNMSSLMSFIQADSFTCNNIDAAKIYGMCFSSITIDKFAIPNGRKVDLQLGNLGYLQSFNYRIDTTATSCQLYYNLPAANVSLSRFNPSIWNRRFGFTEQSVFKPQPVGVFTDHDVVYAQHCFKAPTNFCPCKLDGSLCVGNGPGIDAGYKNSGIGTCPAGTNYLTCHNAAQCNCLCTPDPITSKSTGPYKCPQTKYLVGIGEHCSGLAIKSDYCGGNPCTCQPQAFLGWSVDSCLQGDRCNIFANFILHDVNSGTTCSTDLQKSNTDIILGVCVNYDLYGITGQGIFVEANATYYNSWQNLLYDSNGNLYGFRDYLTNRTFMIRSCYSGRVSAAFHANSSEPALLFRNIKCNYVFNNTLSRQLQPINYFDSYLGCVVNADNSTASAVQTCDLTVGSGYCVDYSTKRRSVRAITTGYRFTNFEPFTVNSVNDSLEPVGGLYEIQIPSEFTIGNMEEFIQTSSPKVTIDCSAFVCGDCAACKSQLVEYGSFCDNINAILTEVNELLDTTQLQVANSLMNGVTLSTKLKDGVNFNVDDINFSPVLGCLGSECNKVSSRSAIEDLLFSKVKLSDVGFVEAYNNCTGGAEIRDLICVQSYNGIKVLPPLLSENQISGYTLAATSASLFPPWSAAAGVPFYLNVQYRINGIGVTMDVLSQNQKLIANAFNNALDAIQEGFDATNSALVKIQAVVNANAEALNNLLQQLSNRFGAISSSLQEILSRLDALEAQRQIDRLINGRFTALNAYVSQQLSDSTLVKFSAAQAMEKVNECVKSQSSRINFCGNGNHIISLVQNAPYGLYFIHFSYVPTKYVTAKVSPGLCIAGDRGIAPKSGYFVNVNNTWMFTGSGYYYPEPITGNNVVVMSTCAVNYTKAPDVMLNISTPNLPDFKEELDQWFKNQTSVAPDLSLDYINVTFLDLQDEMNRLQEAIKLLNQSYINLKDIGTYEYYVKWPWYVWLLIGFAGVAMLVLLFFICCCTGCGTSCFKKCGGCCDDYTGHQELVIKTSHDD.

A signal peptide spans 1–13; the sequence is MFLILLISLPMAL. Over 14–1307 the chain is Extracellular; that stretch reads AVIGDLKCTT…GTYEYYVKWP (1294 aa). The 284-residue stretch at 15–298 folds into the BetaCoV S1-NTD domain; that stretch reads VIGDLKCTTV…DFMSEIKCKT (284 aa). Intrachain disulfides connect cysteine 21–cysteine 165, cysteine 160–cysteine 193, cysteine 172–cysteine 252, cysteine 286–cysteine 296, and cysteine 331–cysteine 356. Asparagine 59 and asparagine 133 each carry an N-linked (GlcNAc...) asparagine; by host glycan. N-linked (GlcNAc...) asparagine; by host glycosylation is present at asparagine 198. The region spanning 329–617 is the BetaCoV S1-CTD domain; it reads PDCNIEAWLN…DVNSGTTCST (289 aa). Asparagine 359 carries N-linked (GlcNAc...) asparagine; by host glycosylation. Cystine bridges form between cysteine 374/cysteine 427 and cysteine 386/cysteine 615. N-linked (GlcNAc...) asparagine; by host glycans are attached at residues asparagine 437, asparagine 649, asparagine 676, asparagine 696, asparagine 714, asparagine 739, and asparagine 788. 2 fusion peptide regions span residues 914–935 and 933–953; these read SAIE…VEAY and EAYN…VQSY. Residue asparagine 937 is glycosylated (N-linked (GlcNAc...) asparagine; by host). Cysteine 938 and cysteine 949 are oxidised to a cystine. Positions 1014–1064 are heptad repeat 1; it reads QKLIANAFNNALDAIQEGFDATNSALVKIQAVVNANAEALNNLLQQLSNRF. A coiled-coil region spans residues 1043 to 1087; sequence QAVVNANAEALNNLLQQLSNRFGAISSSLQEILSRLDALEAQRQI. N-linked (GlcNAc...) asparagine; by host glycosylation is found at asparagine 1194, asparagine 1224, asparagine 1234, asparagine 1253, asparagine 1267, and asparagine 1288. A heptad repeat 2 region spans residues 1258-1296; that stretch reads APDLSLDYINVTFLDLQDEMNRLQEAIKLLNQSYINLKD. Positions 1269 to 1297 form a coiled coil; the sequence is TFLDLQDEMNRLQEAIKLLNQSYINLKDI. Residues 1308-1328 traverse the membrane as a helical segment; the sequence is WYVWLLIGFAGVAMLVLLFFI. Topologically, residues 1329–1363 are cytoplasmic; sequence CCCTGCGTSCFKKCGGCCDDYTGHQELVIKTSHDD. Positions 1359 to 1363 match the KxHxx motif; it reads TSHDD.

This sequence belongs to the betacoronaviruses spike protein family. Homotrimer; each monomer consists of a S1 and a S2 subunit. The resulting peplomers protrude from the virus surface as spikes. Post-translationally, specific enzymatic cleavages in vivo yield mature proteins. The precursor is processed into S1 and S2 by host cell furin or another cellular protease to yield the mature S1 and S2 proteins. Additionally, a second cleavage leads to the release of a fusion peptide after viral attachment to host cell receptor. In terms of processing, the cytoplasmic Cys-rich domain is palmitoylated. Spike glycoprotein is digested within host endosomes.

It localises to the virion membrane. Its subcellular location is the host endoplasmic reticulum-Golgi intermediate compartment membrane. The protein resides in the host cell membrane. In terms of biological role, attaches the virion to the cell membrane by interacting with host receptor, initiating the infection. Its function is as follows. Mediates fusion of the virion and cellular membranes by acting as a class I viral fusion protein. Under the current model, the protein has at least three conformational states: pre-fusion native state, pre-hairpin intermediate state, and post-fusion hairpin state. During viral and target cell membrane fusion, the coiled coil regions (heptad repeats) assume a trimer-of-hairpins structure, positioning the fusion peptide in close proximity to the C-terminal region of the ectodomain. The formation of this structure appears to drive apposition and subsequent fusion of viral and target cell membranes. Acts as a viral fusion peptide which is unmasked following S2 cleavage occurring upon virus endocytosis. This is Spike glycoprotein from Bos taurus (Bovine).